Here is a 428-residue protein sequence, read N- to C-terminus: GTPase Obg (428 aa).

Positions Met-1 to Leu-158 constitute an Obg domain. The interval Ala-117–Gly-143 is disordered. One can recognise an OBG-type G domain in the interval Ala-159 to Glu-329. GTP contacts are provided by residues Gly-165 to Ser-172, Phe-190 to Val-194, Asp-212 to Gly-215, Asn-282 to Asp-285, and Ser-310 to Val-312. Mg(2+)-binding residues include Ser-172 and Thr-192. An OCT domain is found at Thr-350 to Asp-428.

The protein belongs to the TRAFAC class OBG-HflX-like GTPase superfamily. OBG GTPase family. In terms of assembly, monomer. The cofactor is Mg(2+).

The protein resides in the cytoplasm. Its function is as follows. An essential GTPase which binds GTP, GDP and possibly (p)ppGpp with moderate affinity, with high nucleotide exchange rates and a fairly low GTP hydrolysis rate. Plays a role in control of the cell cycle, stress response, ribosome biogenesis and in those bacteria that undergo differentiation, in morphogenesis control. The sequence is that of GTPase Obg from Bacillus velezensis (strain DSM 23117 / BGSC 10A6 / LMG 26770 / FZB42) (Bacillus amyloliquefaciens subsp. plantarum).